Here is a 789-residue protein sequence, read N- to C-terminus: MYLSRPTGVARFAASSSSSSSASLFPGVDVDTTTKTGALHFEETKERIKKLFDKVELSVSAYDTAWVAMVPSPNSLNQPLFPECINWVLDSQHADGSWGLLHNDQLLMKANLLSTLACVLTLKRWNIGHDHMSKALDFIKSNIASATDENQRSPVGFDIIFPGMIEYAKDLNLNLPLAPTNVDALVRKKELELRSCRSNSEGGKAYLAYVSEGIGKLQDWDMVMQYQRKNGSLFNSPSTTAAAFMHRNDDGCFDYLRSLLQKFDGSVPTIYPLDIYARLHMVDSLQKFGIARHFKEEIRSVLDETYRCWMQGEENIFLDASTCAMAFRMLRVEGYDVSSDQLTQFSEDIFPNCLGGYLKDFGASLELYKASQIITHPDESVLENINSWTSRFLKHGLSSDSVWSDRTDSVVKQEAVNALEFPYNATLERLISKRAMESYSGDIVRISKSPYACLNFGHQDFLELAVEDFNTLQRIHLKELEELQRWVVENKLDELKFFRLHLGYCYFAAAATLTDPELHDARIAWAQNGVLTTVVDDFYDGGGSEEELDNLIELVEKWDPDGEVGYCSKDVEIVFLALHSTVCEIGRRALVWQGRSVMRNVIDGWLALLKVMRKEAEWSTNKVVPSMGEYMEQAHVSFALGPIILPMLFFVGPKLSEEMIGSCEYQKLYKLMSTAGRLKNDIRSYDRECKEGKLNILSLWMIDGGGNVTKEEAIEAIKGDFERAIRELLGLVLQENTTIPRACKDLFWKLMSIVNLFYMEDDGYTSNRLMNTVKAMFEQPMDLDALLNK.

Residues aspartate 536, aspartate 540, asparagine 680, serine 684, and glutamate 688 each contribute to the Mg(2+) site. Residues 536-540 (DDFYD) carry the DDXXD motif motif.

Belongs to the terpene synthase family. The cofactor is Mg(2+). In terms of processing, the N-terminus is blocked. Abundant in most tissues. Present in low amounts in mature cotyledons.

It is found in the plastid. The protein localises to the chloroplast. The enzyme catalyses ent-copalyl diphosphate = ent-kaur-16-ene + diphosphate. The protein operates within plant hormone biosynthesis; gibberellin biosynthesis. Catalyzes the conversion of ent-copalyl diphosphate to the gibberellin precursor ent-kaur-16-ene. This is Ent-kaur-16-ene synthase, chloroplastic from Cucurbita maxima (Pumpkin).